A 423-amino-acid polypeptide reads, in one-letter code: Serine--tRNA ligase (423 aa).

230–232 lines the L-serine pocket; it reads TAE. 261-263 contacts ATP; the sequence is RSE. Position 284 (Glu284) interacts with L-serine. ATP is bound at residue 348–351; sequence EISS. L-serine is bound at residue Ser383.

Belongs to the class-II aminoacyl-tRNA synthetase family. Type-1 seryl-tRNA synthetase subfamily. Homodimer. The tRNA molecule binds across the dimer.

It localises to the cytoplasm. The enzyme catalyses tRNA(Ser) + L-serine + ATP = L-seryl-tRNA(Ser) + AMP + diphosphate + H(+). It catalyses the reaction tRNA(Sec) + L-serine + ATP = L-seryl-tRNA(Sec) + AMP + diphosphate + H(+). It functions in the pathway aminoacyl-tRNA biosynthesis; selenocysteinyl-tRNA(Sec) biosynthesis; L-seryl-tRNA(Sec) from L-serine and tRNA(Sec): step 1/1. In terms of biological role, catalyzes the attachment of serine to tRNA(Ser). Is also able to aminoacylate tRNA(Sec) with serine, to form the misacylated tRNA L-seryl-tRNA(Sec), which will be further converted into selenocysteinyl-tRNA(Sec). This chain is Serine--tRNA ligase, found in Levilactobacillus brevis (strain ATCC 367 / BCRC 12310 / CIP 105137 / JCM 1170 / LMG 11437 / NCIMB 947 / NCTC 947) (Lactobacillus brevis).